Reading from the N-terminus, the 1257-residue chain is Endochitinase A (1257 aa).

An N-terminal signal peptide occupies residues 1 to 21 (MVFKPLTIAAAIAGLTPFVSA). In terms of domain architecture, GH18 spans 28–339 (SNVAVYYGQG…DVIKDILVAV (312 aa)). Glutamate 175 serves as the catalytic Proton donor. Disordered stretches follow at residues 364–429 (TPVA…STPV), 595–980 (TPAA…LAPI), and 1141–1174 (DALT…PTTT). Residues 595 to 696 (TPAASSSPAV…STPVRSTSSV (102 aa)) show a composition bias toward low complexity. A compositionally biased stretch (polar residues) spans 700–715 (KSSSAPVIPKPSSTVI). Low complexity predominate over residues 716–935 (ATFTSSSGSL…ASGSGAQDST (220 aa)). The N-linked (GlcNAc...) asparagine glycan is linked to asparagine 825. Residues 940–964 (HASTLSPSYSTPLASASGQTGSPTT) show a composition bias toward polar residues. Asparagine 973 is a glycosylation site (N-linked (GlcNAc...) asparagine). Residues 1145-1154 (ASPSGSQPAG) are compositionally biased toward polar residues. Residues 1156–1174 (SSPGQSAPTAPASTAPTTT) are compositionally biased toward low complexity. The GPI-anchor amidated glycine moiety is linked to residue glycine 1231. A propeptide spans 1232–1257 (AASRVSRLQHGAGAVSAFALFLLAAI) (removed in mature form).

The protein belongs to the glycosyl hydrolase 18 family. Chitinase class III subfamily. Post-translationally, O-glycosylated.

It is found in the cell membrane. Its subcellular location is the secreted. The protein localises to the cell wall. It catalyses the reaction Random endo-hydrolysis of N-acetyl-beta-D-glucosaminide (1-&gt;4)-beta-linkages in chitin and chitodextrins.. In terms of biological role, GPI-anchored chitinase involved in the degradation of chitin, a component of the cell walls of fungi and exoskeletal elements of some animals (including worms and arthropods). Required to reshape the cell wall at the sites where cell wall remodeling and/or cell wall maturation actively take place such as sites of conidia formation. The protein is Endochitinase A (ctcA) of Aspergillus niger (strain ATCC MYA-4892 / CBS 513.88 / FGSC A1513).